The chain runs to 73 residues: Putative ORF9c protein (73 aa).

The chain crosses the membrane as a helical span at residues 47–67; it reads AAVGELLLLEWLAMAVMLLLL.

It is found in the membrane. May induce apoptosis in cardiomyocytes when overexpressed ex-vivo. This chain is Putative ORF9c protein, found in Homo sapiens (Human).